Reading from the N-terminus, the 253-residue chain is Aspartate/glutamate leucyltransferase (253 aa).

This sequence belongs to the R-transferase family. Bpt subfamily.

It is found in the cytoplasm. The catalysed reaction is N-terminal L-glutamyl-[protein] + L-leucyl-tRNA(Leu) = N-terminal L-leucyl-L-glutamyl-[protein] + tRNA(Leu) + H(+). It catalyses the reaction N-terminal L-aspartyl-[protein] + L-leucyl-tRNA(Leu) = N-terminal L-leucyl-L-aspartyl-[protein] + tRNA(Leu) + H(+). In terms of biological role, functions in the N-end rule pathway of protein degradation where it conjugates Leu from its aminoacyl-tRNA to the N-termini of proteins containing an N-terminal aspartate or glutamate. In Allorhizobium ampelinum (strain ATCC BAA-846 / DSM 112012 / S4) (Agrobacterium vitis (strain S4)), this protein is Aspartate/glutamate leucyltransferase.